The primary structure comprises 640 residues: Threonine--tRNA ligase (640 aa).

Positions 1–61 (MPIITLPDGS…TNDAEIQIIT (61 aa)) constitute a TGS domain. The interval 242–533 (DHRKLGKKLS…LIENYSGNLP (292 aa)) is catalytic. Zn(2+)-binding residues include C333, H384, and H510.

It belongs to the class-II aminoacyl-tRNA synthetase family. Homodimer. Zn(2+) is required as a cofactor.

The protein resides in the cytoplasm. It carries out the reaction tRNA(Thr) + L-threonine + ATP = L-threonyl-tRNA(Thr) + AMP + diphosphate + H(+). Its function is as follows. Catalyzes the attachment of threonine to tRNA(Thr) in a two-step reaction: L-threonine is first activated by ATP to form Thr-AMP and then transferred to the acceptor end of tRNA(Thr). Also edits incorrectly charged L-seryl-tRNA(Thr). This chain is Threonine--tRNA ligase, found in Prochlorococcus marinus (strain NATL1A).